We begin with the raw amino-acid sequence, 209 residues long: Protein-L-isoaspartate O-methyltransferase (209 aa).

The active site involves Ser-55.

This sequence belongs to the methyltransferase superfamily. L-isoaspartyl/D-aspartyl protein methyltransferase family.

It localises to the cytoplasm. The catalysed reaction is [protein]-L-isoaspartate + S-adenosyl-L-methionine = [protein]-L-isoaspartate alpha-methyl ester + S-adenosyl-L-homocysteine. In terms of biological role, catalyzes the methyl esterification of L-isoaspartyl residues in peptides and proteins that result from spontaneous decomposition of normal L-aspartyl and L-asparaginyl residues. It plays a role in the repair and/or degradation of damaged proteins. The polypeptide is Protein-L-isoaspartate O-methyltransferase (Anaeromyxobacter dehalogenans (strain 2CP-1 / ATCC BAA-258)).